The following is a 178-amino-acid chain: MSRIGLAPIAVPKGVDITINGQVVNVKGAKGTLEVELPEPITAAVEDDEIKVSRPDDDRKNRALHGLARSLVNNAVVGVTEGYTKKMEIFGVGYRVQQKGKDLEFSLGYSHPILIEAPEGITFAVDGATKLSVSGIDKQLVGQVAAYIRRLRKDDPYKGKGIRYDGEQVRRKVGKTGK.

This sequence belongs to the universal ribosomal protein uL6 family. Part of the 50S ribosomal subunit.

This protein binds to the 23S rRNA, and is important in its secondary structure. It is located near the subunit interface in the base of the L7/L12 stalk, and near the tRNA binding site of the peptidyltransferase center. The polypeptide is Large ribosomal subunit protein uL6 (Corynebacterium aurimucosum (strain ATCC 700975 / DSM 44827 / CIP 107346 / CN-1) (Corynebacterium nigricans)).